The chain runs to 777 residues: Myotubularin-related protein 10 (777 aa).

The disordered stretch occupies residues 196–217; it reads PSGDGGGGGGGGNGAGGGSSQK. Gly residues predominate over residues 197-214; sequence SGDGGGGGGGGNGAGGGS. One can recognise a Myotubularin phosphatase domain in the interval 221 to 661; it reads FETYSDWDRE…THIKLWKLCY (441 aa). Phosphoserine is present on residues serine 607 and serine 751.

Belongs to the protein-tyrosine phosphatase family. Non-receptor class myotubularin subfamily.

This is Myotubularin-related protein 10 (MTMR10) from Homo sapiens (Human).